Here is a 120-residue protein sequence, read N- to C-terminus: Large ribosomal subunit protein eL18 (120 aa).

It belongs to the eukaryotic ribosomal protein eL18 family.

The sequence is that of Large ribosomal subunit protein eL18 from Pyrococcus horikoshii (strain ATCC 700860 / DSM 12428 / JCM 9974 / NBRC 100139 / OT-3).